Consider the following 245-residue polypeptide: D-aminoacyl-tRNA deacylase (245 aa).

The protein belongs to the DtdA deacylase family. As to quaternary structure, monomer. It depends on Zn(2+) as a cofactor.

It catalyses the reaction a D-aminoacyl-tRNA + H2O = a tRNA + a D-alpha-amino acid + H(+). It carries out the reaction glycyl-tRNA(Ala) + H2O = tRNA(Ala) + glycine + H(+). D-aminoacyl-tRNA deacylase with broad substrate specificity. By recycling D-aminoacyl-tRNA to D-amino acids and free tRNA molecules, this enzyme counteracts the toxicity associated with the formation of D-aminoacyl-tRNA entities in vivo. The sequence is that of D-aminoacyl-tRNA deacylase from Ignicoccus hospitalis (strain KIN4/I / DSM 18386 / JCM 14125).